A 459-amino-acid polypeptide reads, in one-letter code: UDP-N-acetylmuramate--L-alanine ligase (459 aa).

Gly118–Thr124 provides a ligand contact to ATP.

Belongs to the MurCDEF family.

Its subcellular location is the cytoplasm. The enzyme catalyses UDP-N-acetyl-alpha-D-muramate + L-alanine + ATP = UDP-N-acetyl-alpha-D-muramoyl-L-alanine + ADP + phosphate + H(+). It participates in cell wall biogenesis; peptidoglycan biosynthesis. Cell wall formation. The polypeptide is UDP-N-acetylmuramate--L-alanine ligase (Agathobacter rectalis (strain ATCC 33656 / DSM 3377 / JCM 17463 / KCTC 5835 / VPI 0990) (Eubacterium rectale)).